The following is a 226-amino-acid chain: Ornithine decarboxylase antizyme (226 aa).

This sequence belongs to the ODC antizyme family. In terms of assembly, interacts with ODC and thereby sterically blocks ODC homodimerization.

In terms of biological role, ornithine decarboxylase (ODC) antizyme protein that negatively regulates ODC activity and intracellular polyamine biosynthesis in response to increased intracellular polyamine levels. Binds to ODC monomers, inhibiting the assembly of the functional ODC homodimer, and targets the monomers for ubiquitin-independent proteolytic destruction by the 26S proteasome. The polypeptide is Ornithine decarboxylase antizyme (spa1) (Schizosaccharomyces pombe (strain 972 / ATCC 24843) (Fission yeast)).